An 89-amino-acid polypeptide reads, in one-letter code: Small ribosomal subunit protein uS15 (89 aa).

The protein belongs to the universal ribosomal protein uS15 family. In terms of assembly, part of the 30S ribosomal subunit. Forms a bridge to the 50S subunit in the 70S ribosome, contacting the 23S rRNA.

One of the primary rRNA binding proteins, it binds directly to 16S rRNA where it helps nucleate assembly of the platform of the 30S subunit by binding and bridging several RNA helices of the 16S rRNA. Functionally, forms an intersubunit bridge (bridge B4) with the 23S rRNA of the 50S subunit in the ribosome. In Dictyoglomus turgidum (strain DSM 6724 / Z-1310), this protein is Small ribosomal subunit protein uS15.